Reading from the N-terminus, the 473-residue chain is Histone-lysine N-methyltransferase ATXR2 (473 aa).

The region spanning 33 to 441 (KLITSRRCNG…KNEEVTISYI (409 aa)) is the SET domain. An MYND-type; degenerate zinc finger spans residues 134–203 (EEQCGGSSSS…DWESSHSLLC (70 aa)). Residues Cys-176, Cys-180, His-199, and Cys-203 each coordinate Zn(2+). Tyr-440 provides a ligand contact to S-adenosyl-L-methionine.

It belongs to the class V-like SAM-binding methyltransferase superfamily. Histone-lysine methyltransferase family. TRX/MLL subfamily. As to quaternary structure, interacts with JMJ30. Binds to ARF7 and ARF19 in the nucleus.

It localises to the nucleus. The enzyme catalyses L-lysyl-[histone] + S-adenosyl-L-methionine = N(6)-methyl-L-lysyl-[histone] + S-adenosyl-L-homocysteine + H(+). Its function is as follows. Histone methyltransferase that methylates 'Lys-36' (H3K36me) of histone H3 to produce H3K36me3. Promotes early stages of cellular dedifferentiation through H3K36me3-dependent, and to a lesser degree H3K4me3-dependent, activation of Lateral organ Boundaries-Domain (LBD) (e.g. LBD16 and LBD29) genes. Positive regulator of root organogenesis including lateral root formation as well as adventitious root formation from wounded leaf tissues. Recruited by JMJ30/ARF (e.g. ARF7 and ARF19) complexes to promote the deposition of H3K36me3 and, to a lower extent, H3K4me3 at LBD genes promoters, thus ensuring their stable activation during callus formation on callus-inducing medium (CIM). This is Histone-lysine N-methyltransferase ATXR2 from Arabidopsis thaliana (Mouse-ear cress).